Reading from the N-terminus, the 892-residue chain is MFRKLGSSGSLWKPKNPHSLEYLKYLQGVLTKNEKVTENNKKILVEALRAIAEILIWGDQNDASVFDFFLERQMLLYFLKIMEQGNTPLNVQLLQTLNILFENIRHETSLYFLLSNNHVNSIISHKFDLQNDEIMAYYISFLKTLSFKLNPATIHFFFNETTEEFPLLVEVLKLYNWNESMVRIAVRNILLNIVRVQDDSMIIFAIKHTKEYLSELIDSLVGLSLEMDTFVRSAENVLANRERLRGKVDDLIDLIHYIGELLDVEAVAESLSILVTTRYLSPLLLSSISPRRDNHSLLLTPISALFFFSEFLLIVRHHETIYTFLSSFLFDTQNTLTTHWIRHNEKYCLEPITLSSPTGEYVNEDHVFFDFLLEAFDSSQADDSKAFYGLMLIYSMFQNNADVGELLSAANFPVLKESTTTSLAQQNLARLRIASTSSISKRTRAITEIGVEATEEDEIFHDVPEEQTLEDLVDDVLVDTENSAISDPEPKNVESESRSRFQSAVDELPPPSTSGCDGRLFDALSSIIKAVGTDDNRIRPITLELACLVIRQILMTVDDEKVHTSLTKLCFEVRLKLLSSIGQYVNGENLFLEWFEDEYAEFEVNHVNFDIIGHEMLLPPAATPLSNLLLHKRLPSGFEERIRTQIVFYLHIRKLERDLTGEGDTELPVRVLNSDQEPVAIGDCINLHNSDLLSCTVVPQQLCSLGKPGDRLARFLVTDRLQLILVEPDSRKAGWAIVRFVGLLQDTTINGDSTDSKVLHVVVEGQPSRIKKRHPVLTAKFIFDDHIRCMAAKQRLTKGRQTARGLKLQAICSALGVPRIDPATMTSSPRMNPFRIVKGCAPGSVRKTVSTSSSSSQGRPGHYSANLRSASRNAGMIPDDPTQPSSSSERRS.

In terms of domain architecture, FPL spans Leu-48–Val-194. Residues Ser-844–Ser-856 show a composition bias toward low complexity. A disordered region spans residues Ser-844 to Ser-892. Positions Thr-882 to Ser-892 are enriched in polar residues.

The protein belongs to the CLEC16A/gop-1 family.

Its function is as follows. Regulator of mitophagy. The chain is Protein CLEC16A homolog (gop-1) from Caenorhabditis elegans.